The following is a 362-amino-acid chain: tRNA/tmRNA (uracil-C(5))-methyltransferase (362 aa).

S-adenosyl-L-methionine contacts are provided by Gln182, Tyr210, Asn215, Glu231, and Asp293. The active-site Nucleophile is Cys318. Catalysis depends on Glu352, which acts as the Proton acceptor.

Belongs to the class I-like SAM-binding methyltransferase superfamily. RNA M5U methyltransferase family. TrmA subfamily.

The catalysed reaction is uridine(54) in tRNA + S-adenosyl-L-methionine = 5-methyluridine(54) in tRNA + S-adenosyl-L-homocysteine + H(+). It catalyses the reaction uridine(341) in tmRNA + S-adenosyl-L-methionine = 5-methyluridine(341) in tmRNA + S-adenosyl-L-homocysteine + H(+). Functionally, dual-specificity methyltransferase that catalyzes the formation of 5-methyluridine at position 54 (m5U54) in all tRNAs, and that of position 341 (m5U341) in tmRNA (transfer-mRNA). This Neisseria meningitidis serogroup A / serotype 4A (strain DSM 15465 / Z2491) protein is tRNA/tmRNA (uracil-C(5))-methyltransferase.